The following is a 219-amino-acid chain: uncharacterized protein (219 aa).

The next 2 helical transmembrane spans lie at 81 to 101 (VVKW…NYLI) and 168 to 188 (PIME…TALV).

It is found in the membrane. This is an uncharacterized protein from Saccharomyces cerevisiae (strain ATCC 204508 / S288c) (Baker's yeast).